Here is a 2111-residue protein sequence, read N- to C-terminus: Mycocerosic acid synthase-like polyketide synthase (2111 aa).

The signal sequence occupies residues 1-15; sequence MTQNCVAPVAIIGMA. The N-palmitoyl cysteine moiety is linked to residue Cys-16. Cys-16 carries the S-diacylglycerol cysteine lipid modification. One can recognise a Ketosynthase family 3 (KS3) domain in the interval 16–428; that stretch reads CRLPGAINSP…GTNVHAVLEQ (413 aa). The active-site Acyl-thioester intermediate; for beta-ketoacyl synthase activity is Cys-178. Active-site for beta-ketoacyl synthase activity residues include His-313 and His-349. The linker domain (LD) stretch occupies residues 430–537; sequence PESPAETAAE…MPQQAVTNDD (108 aa). The tract at residues 538–837 is acyltransferase (AT); the sequence is RGPVWVFSGQ…LAVFAAMRRQ (300 aa). The Acyl-ester intermediate; for acyltransferase activity role is filled by Ser-629. The dehydratase (DH) stretch occupies residues 896–1176; that stretch reads PSVSVHPLLG…LSAMGLQLGT (281 aa). The N-terminal hotdog fold stretch occupies residues 901 to 1025; sequence HPLLGSHVVL…GDVDAERPAA (125 aa). Residues 901-1183 form the PKS/mFAS DH domain; the sequence is HPLLGSHVVL…LGTGNSDKAE (283 aa). His-934 acts as the Proton acceptor; for dehydratase activity in catalysis. Residues 1036–1183 form a C-terminal hotdog fold region; the sequence is PNRVDGDELR…LGTGNSDKAE (148 aa). Residue Asp-1100 is the Proton donor; for dehydratase activity of the active site. The tract at residues 1215-1391 is pseudo beta-ketoacyl reductase (PsiKR); the sequence is SWLVILAGDD…SPEDETAWRD (177 aa). The segment at 1419 to 1743 is enoylreductase (ER); it reads EGMRLVVRNP…QHTGKLVIDI (325 aa). A beta-ketoacyl reductase (KR) region spans residues 1765–2008; that stretch reads GAYVITGGLG…RSPFAELFLA (244 aa). Residues 1773–1776, 1796–1799, 1824–1825, and 1902–1903 contribute to the NADP(+) site; these read LGGL, SRSA, DI, and FS. In terms of domain architecture, Carrier spans 2029–2104; the sequence is EEWPTHLRRL…QRLCEMLDTD (76 aa). The residue at position 2064 (Ser-2064) is an O-(pantetheine 4'-phosphoryl)serine.

As to quaternary structure, homodimer.

The protein resides in the cell membrane. It participates in lipid metabolism; fatty acid biosynthesis. Polyketide synthase involved in the biosynthesis of 2,4-dimethyl-2-eicosenoic acid, a lipid component of the lipooligosaccharides (LOS) which are not located at the bacterial surface but rather in deeper compartments of the cell envelope of M.smegmatis. This Mycolicibacterium smegmatis (strain ATCC 700084 / mc(2)155) (Mycobacterium smegmatis) protein is Mycocerosic acid synthase-like polyketide synthase.